Reading from the N-terminus, the 150-residue chain is MAKKLVGSMKLQIPAGQANPSPPVGPALGQRGINIMEFCKAFNAKTQEMEQGAPCPTVITYYQDKSFTMDIKTPPASYYLKKAAGLKPVGKRNRPRGAETPGRETVASITSKQLREIAEAKMVDLSANDVEAAMKIILGSAKSMGIEVKG.

Belongs to the universal ribosomal protein uL11 family. As to quaternary structure, part of the ribosomal stalk of the 50S ribosomal subunit. Interacts with L10 and the large rRNA to form the base of the stalk. L10 forms an elongated spine to which L12 dimers bind in a sequential fashion forming a multimeric L10(L12)X complex. One or more lysine residues are methylated.

In terms of biological role, forms part of the ribosomal stalk which helps the ribosome interact with GTP-bound translation factors. The sequence is that of Large ribosomal subunit protein uL11 from Jannaschia sp. (strain CCS1).